Consider the following 224-residue polypeptide: Uracil-DNA glycosylase 2 (224 aa).

The active-site Proton acceptor is the aspartate 64.

The protein belongs to the uracil-DNA glycosylase (UDG) superfamily. UNG family.

It localises to the cytoplasm. It carries out the reaction Hydrolyzes single-stranded DNA or mismatched double-stranded DNA and polynucleotides, releasing free uracil.. Its function is as follows. Excises uracil residues from the DNA which can arise as a result of misincorporation of dUMP residues by DNA polymerase or due to deamination of cytosine. The sequence is that of Uracil-DNA glycosylase 2 from Listeria monocytogenes serotype 4b (strain F2365).